The primary structure comprises 727 residues: UvrABC system protein C (727 aa).

Positions 16–95 constitute a GIY-YIG domain; that stretch reads VDPGVYKFRD…IKEFDPRFNV (80 aa). One can recognise a UVR domain in the interval 208–243; sequence DRLVRQLEARMQEASEELDFETAARLRDDVGALRRA. Disordered stretches follow at residues 503–527 and 679–727; these read DADQ…QTGR and SADV…TGVE. Residues 701–711 are compositionally biased toward basic and acidic residues; that stretch reads NGADIPREPVE. Residues 718–727 show a composition bias toward polar residues; it reads QSASQRTGVE.

The protein belongs to the UvrC family. In terms of assembly, interacts with UvrB in an incision complex.

Its subcellular location is the cytoplasm. Its function is as follows. The UvrABC repair system catalyzes the recognition and processing of DNA lesions. UvrC both incises the 5' and 3' sides of the lesion. The N-terminal half is responsible for the 3' incision and the C-terminal half is responsible for the 5' incision. In Rhodococcus jostii (strain RHA1), this protein is UvrABC system protein C.